A 189-amino-acid polypeptide reads, in one-letter code: Parkinson disease protein 7 homolog (189 aa).

The residue at position 2 (Ala-2) is an N-acetylalanine. Residues Cys-46 and Cys-53 are each lipidated (S-palmitoyl cysteine). A Phosphotyrosine modification is found at Tyr-67. The active-site Nucleophile is the Cys-106. Cys-106 is subject to Cysteine sulfinic acid (-SO2H); alternate. The S-palmitoyl cysteine; alternate moiety is linked to residue Cys-106. Residue His-126 is part of the active site. Residue Lys-130 forms a Glycyl lysine isopeptide (Lys-Gly) (interchain with G-Cter in SUMO) linkage. An N6-acetyllysine modification is found at Lys-148. N6-succinyllysine is present on Lys-182.

It belongs to the peptidase C56 family. In terms of assembly, homodimer. Binds EFCAB6/DJBP and PIAS2. Part of a ternary complex containing PARK7, EFCAB6/DJBP and AR. Interacts (via N-terminus) with OTUD7B. Interacts with BBS1, HIPK1, CLCF1 and MTERF. Forms a complex with PINK1 and PRKN. Interacts (via C-terminus) with NCF1; the interaction is enhanced by LPS and modulates NCF1 phosphorylation and membrane translocation. Interacts with NENF. Deglycase activity does not require glutathione as a cofactor, however, glycated glutathione constitutes a PARK7 substrate. is required as a cofactor. Sumoylated on Lys-130 by PIAS2 or PIAS4; which is essential for cell-growth promoting activity and transforming activity. Post-translationally, undergoes cleavage of a C-terminal peptide and subsequent activation of protease activity in response to oxidative stress. As to expression, ubiquitous. Detected on epididymal sperm. Highly expressed in testis and prostate. Detected at lower levels in heart, lung, brain, liver, kidney, seminal vesicle, caput and corpus epididymis.

The protein localises to the cell membrane. The protein resides in the cytoplasm. It localises to the membrane raft. It is found in the nucleus. Its subcellular location is the mitochondrion. The protein localises to the endoplasmic reticulum. It carries out the reaction N(omega)-(1-hydroxy-2-oxopropyl)-L-arginyl-[protein] + H2O = lactate + L-arginyl-[protein] + H(+). The catalysed reaction is N(6)-(1-hydroxy-2-oxopropyl)-L-lysyl-[protein] + H2O = lactate + L-lysyl-[protein] + H(+). The enzyme catalyses S-(1-hydroxy-2-oxopropyl)-L-cysteinyl-[protein] + H2O = lactate + L-cysteinyl-[protein] + H(+). It catalyses the reaction N(omega)-(1-hydroxy-2-oxoethyl)-L-arginyl-[protein] + H2O = L-arginyl-[protein] + glycolate + H(+). It carries out the reaction N(6)-(1-hydroxy-2-oxoethyl)-L-lysyl-[protein] + H2O = glycolate + L-lysyl-[protein] + H(+). The catalysed reaction is S-(1-hydroxy-2-oxoethyl)-L-cysteinyl-[protein] + H2O = glycolate + L-cysteinyl-[protein] + H(+). The enzyme catalyses N(2)-(1-hydroxy-2-oxopropyl)-dGTP + H2O = lactate + dGTP + H(+). It catalyses the reaction N(2)-(1-hydroxy-2-oxopropyl)-GTP + H2O = lactate + GTP + H(+). It carries out the reaction N(2)-(1-hydroxy-2-oxopropyl)-GDP + H2O = lactate + GDP + H(+). The catalysed reaction is N(2)-(1-hydroxy-2-oxopropyl)-GMP + H2O = lactate + GMP + H(+). The enzyme catalyses N(2)-(1-hydroxy-2-oxoethyl)-dGTP + H2O = dGTP + glycolate + H(+). It catalyses the reaction N(2)-(1-hydroxy-2-oxoethyl)-GTP + H2O = glycolate + GTP + H(+). It carries out the reaction N(2)-(1-hydroxy-2-oxoethyl)-GDP + H2O = glycolate + GDP + H(+). The catalysed reaction is N(2)-(1-hydroxy-2-oxoethyl)-GMP + H2O = glycolate + GMP + H(+). The enzyme catalyses an N(2)-(1-hydroxy-2-oxopropyl)-guanosine in RNA + H2O = a guanosine in RNA + lactate + H(+). It catalyses the reaction an N(2)-(1-hydroxy-2-oxopropyl)-2'-deoxyguanosine in DNA + H2O = a 2'-deoxyguanosine in DNA + lactate + H(+). It carries out the reaction an N(2)-(1-hydroxy-2-oxoethyl)-guanosine in RNA + H2O = a guanosine in RNA + glycolate + H(+). The catalysed reaction is an N(2)-(1-hydroxy-2-oxoethyl)-2'-deoxyguanosine in DNA + H2O = a 2'-deoxyguanosine in DNA + glycolate + H(+). Its function is as follows. Protein and nucleotide deglycase that catalyzes the deglycation of the Maillard adducts formed between amino groups of proteins or nucleotides and reactive carbonyl groups of glyoxals. Thus, functions as a protein deglycase that repairs methylglyoxal- and glyoxal-glycated proteins, and releases repaired proteins and lactate or glycolate, respectively. Deglycates cysteine, arginine and lysine residues in proteins, and thus reactivates these proteins by reversing glycation by glyoxals. Acts on early glycation intermediates (hemithioacetals and aminocarbinols), preventing the formation of advanced glycation endproducts (AGE) that cause irreversible damage. Also functions as a nucleotide deglycase able to repair glycated guanine in the free nucleotide pool (GTP, GDP, GMP, dGTP) and in DNA and RNA. Is thus involved in a major nucleotide repair system named guanine glycation repair (GG repair), dedicated to reversing methylglyoxal and glyoxal damage via nucleotide sanitization and direct nucleic acid repair. Also displays an apparent glyoxalase activity that in fact reflects its deglycase activity. Plays an important role in cell protection against oxidative stress and cell death acting as oxidative stress sensor and redox-sensitive chaperone and protease; functions probably related to its primary function. It is involved in neuroprotective mechanisms like the stabilization of NFE2L2 and PINK1 proteins, male fertility as a positive regulator of androgen signaling pathway as well as cell growth and transformation through, for instance, the modulation of NF-kappa-B signaling pathway. Eliminates hydrogen peroxide and protects cells against hydrogen peroxide-induced cell death. Required for correct mitochondrial morphology and function as well as for autophagy of dysfunctional mitochondria. Plays a role in regulating expression or stability of the mitochondrial uncoupling proteins SLC25A14 and SLC25A27 in dopaminergic neurons of the substantia nigra pars compacta and attenuates the oxidative stress induced by calcium entry into the neurons via L-type channels during pacemaking. Regulates astrocyte inflammatory responses, may modulate lipid rafts-dependent endocytosis in astrocytes and neuronal cells. In pancreatic islets, involved in the maintenance of mitochondrial reactive oxygen species (ROS) levels and glucose homeostasis in an age- and diet dependent manner. Protects pancreatic beta cells from cell death induced by inflammatory and cytotoxic setting. Binds to a number of mRNAs containing multiple copies of GG or CC motifs and partially inhibits their translation but dissociates following oxidative stress. Metal-binding protein able to bind copper as well as toxic mercury ions, enhances the cell protection mechanism against induced metal toxicity. In macrophages, interacts with the NADPH oxidase subunit NCF1 to direct NADPH oxidase-dependent ROS production, and protects against sepsis. The chain is Parkinson disease protein 7 homolog from Rattus norvegicus (Rat).